Consider the following 308-residue polypeptide: Adult enhancer factor 1 (308 aa).

Disordered regions lie at residues 50–94 (AHMA…PLPF) and 123–143 (QAAAAEQQQPPPPTSHLTHLT). Positions 56 to 76 (QQQQQQQQQQQQQHHQQQQQQ) are enriched in low complexity. Pro residues predominate over residues 81 to 90 (PSVPPPPTEL). 4 C2H2-type zinc fingers span residues 184-206 (FHCTVCDRRFRQLSTLTNHVKIH), 212-234 (YKCNVCDKTFRQSSTLTNHLKIH), 240-262 (YNCNFCPKHFRQLSTLANHVKIH), and 268-290 (FECVICKKQFRQSSTLNNHIKIH).

In terms of tissue distribution, found in all tissues examined including the ovary and the fat body.

The protein localises to the nucleus. Functionally, transcriptional repressor that binds specifically to fat body-specific enhancers, namely the adult ADH enhancer (AAE) and the enhancer that controls yolk protein gene expression. In Drosophila melanogaster (Fruit fly), this protein is Adult enhancer factor 1 (Aef1).